A 161-amino-acid chain; its full sequence is Allophycocyanin beta chain (161 aa).

Asn71 carries the post-translational modification N4-methylasparagine. Cys81 is a (2R,3E)-phycocyanobilin binding site.

Belongs to the phycobiliprotein family. Heterodimer of an alpha and a beta chain. Post-translationally, contains one covalently linked phycocyanobilin chromophore.

It is found in the plastid. The protein resides in the chloroplast thylakoid membrane. In terms of biological role, light-harvesting photosynthetic bile pigment-protein from the phycobiliprotein complex. Allophycocyanin has a maximum absorption at approximately 650 nanometers. The chain is Allophycocyanin beta chain (apcB) from Porphyra purpurea (Red seaweed).